A 208-amino-acid chain; its full sequence is Small ribosomal subunit protein uS4 (208 aa).

The disordered stretch occupies residues 28–48 (YMERRPYGPGEHGRARKKQDS). One can recognise an S4 RNA-binding domain in the interval 95–160 (MRLDALVLRA…MPPFQVAAAG (66 aa)).

Belongs to the universal ribosomal protein uS4 family. As to quaternary structure, part of the 30S ribosomal subunit. Contacts protein S5. The interaction surface between S4 and S5 is involved in control of translational fidelity.

In terms of biological role, one of the primary rRNA binding proteins, it binds directly to 16S rRNA where it nucleates assembly of the body of the 30S subunit. With S5 and S12 plays an important role in translational accuracy. The chain is Small ribosomal subunit protein uS4 from Arthrobacter sp. (strain FB24).